A 356-amino-acid chain; its full sequence is UDP-3-O-acylglucosamine N-acyltransferase (356 aa).

Catalysis depends on His242, which acts as the Proton acceptor.

It belongs to the transferase hexapeptide repeat family. LpxD subfamily. Homotrimer.

It catalyses the reaction a UDP-3-O-[(3R)-3-hydroxyacyl]-alpha-D-glucosamine + a (3R)-hydroxyacyl-[ACP] = a UDP-2-N,3-O-bis[(3R)-3-hydroxyacyl]-alpha-D-glucosamine + holo-[ACP] + H(+). It functions in the pathway bacterial outer membrane biogenesis; LPS lipid A biosynthesis. In terms of biological role, catalyzes the N-acylation of UDP-3-O-acylglucosamine using 3-hydroxyacyl-ACP as the acyl donor. Is involved in the biosynthesis of lipid A, a phosphorylated glycolipid that anchors the lipopolysaccharide to the outer membrane of the cell. The chain is UDP-3-O-acylglucosamine N-acyltransferase from Acinetobacter baumannii (strain AB0057).